The chain runs to 114 residues: Iron-sulfur cluster insertion protein ErpA (114 aa).

Iron-sulfur cluster is bound by residues Cys42, Cys106, and Cys108.

It belongs to the HesB/IscA family. As to quaternary structure, homodimer. Iron-sulfur cluster serves as cofactor.

In terms of biological role, required for insertion of 4Fe-4S clusters for at least IspG. The polypeptide is Iron-sulfur cluster insertion protein ErpA (Wigglesworthia glossinidia brevipalpis).